The sequence spans 211 residues: Large ribosomal subunit protein uL3 (211 aa).

Gln-150 carries the N5-methylglutamine modification.

This sequence belongs to the universal ribosomal protein uL3 family. Part of the 50S ribosomal subunit. Forms a cluster with proteins L14 and L19. In terms of processing, methylated by PrmB.

Its function is as follows. One of the primary rRNA binding proteins, it binds directly near the 3'-end of the 23S rRNA, where it nucleates assembly of the 50S subunit. This is Large ribosomal subunit protein uL3 from Stutzerimonas stutzeri (strain A1501) (Pseudomonas stutzeri).